Reading from the N-terminus, the 121-residue chain is Small ribosomal subunit protein uS13 (121 aa).

The tract at residues 93-121 (RGLPMRGQRTRTNARTRKGPRKGAAALKK) is disordered.

The protein belongs to the universal ribosomal protein uS13 family. Part of the 30S ribosomal subunit. Forms a loose heterodimer with protein S19. Forms two bridges to the 50S subunit in the 70S ribosome.

Located at the top of the head of the 30S subunit, it contacts several helices of the 16S rRNA. In the 70S ribosome it contacts the 23S rRNA (bridge B1a) and protein L5 of the 50S subunit (bridge B1b), connecting the 2 subunits; these bridges are implicated in subunit movement. Contacts the tRNAs in the A and P-sites. The sequence is that of Small ribosomal subunit protein uS13 from Acidovorax ebreus (strain TPSY) (Diaphorobacter sp. (strain TPSY)).